A 94-amino-acid polypeptide reads, in one-letter code: Large ribosomal subunit protein bL25 (94 aa).

It belongs to the bacterial ribosomal protein bL25 family. In terms of assembly, part of the 50S ribosomal subunit; part of the 5S rRNA/L5/L18/L25 subcomplex. Contacts the 5S rRNA. Binds to the 5S rRNA independently of L5 and L18.

Functionally, this is one of the proteins that binds to the 5S RNA in the ribosome where it forms part of the central protuberance. The protein is Large ribosomal subunit protein bL25 of Escherichia coli O157:H7.